The chain runs to 555 residues: Glucose-6-phosphate isomerase (555 aa).

The active-site Proton donor is the Glu-360. Residues His-391 and Lys-519 contribute to the active site.

This sequence belongs to the GPI family.

The protein localises to the cytoplasm. The enzyme catalyses alpha-D-glucose 6-phosphate = beta-D-fructose 6-phosphate. The protein operates within carbohydrate biosynthesis; gluconeogenesis. It participates in carbohydrate degradation; glycolysis; D-glyceraldehyde 3-phosphate and glycerone phosphate from D-glucose: step 2/4. Its function is as follows. Catalyzes the reversible isomerization of glucose-6-phosphate to fructose-6-phosphate. The protein is Glucose-6-phosphate isomerase of Acinetobacter baumannii (strain AB307-0294).